A 1379-amino-acid chain; its full sequence is DNA-directed RNA polymerase subunit beta (1379 aa).

Belongs to the RNA polymerase beta chain family. The RNAP catalytic core consists of 2 alpha, 1 beta, 1 beta' and 1 omega subunit. When a sigma factor is associated with the core the holoenzyme is formed, which can initiate transcription.

It carries out the reaction RNA(n) + a ribonucleoside 5'-triphosphate = RNA(n+1) + diphosphate. In terms of biological role, DNA-dependent RNA polymerase catalyzes the transcription of DNA into RNA using the four ribonucleoside triphosphates as substrates. In Chelativorans sp. (strain BNC1), this protein is DNA-directed RNA polymerase subunit beta.